The primary structure comprises 520 residues: Lysine--tRNA ligase (520 aa).

The interval M1–A21 is disordered. Over residues P12–A21 the composition is skewed to low complexity. Mg(2+)-binding residues include E430 and E437.

It belongs to the class-II aminoacyl-tRNA synthetase family. In terms of assembly, homodimer. Mg(2+) is required as a cofactor.

The protein localises to the cytoplasm. It catalyses the reaction tRNA(Lys) + L-lysine + ATP = L-lysyl-tRNA(Lys) + AMP + diphosphate. The chain is Lysine--tRNA ligase from Variovorax paradoxus (strain S110).